We begin with the raw amino-acid sequence, 170 residues long: MIIERLVGNLRDLNPLDFNVDHVDLEWFETRKKIARFKTRQGKDIAIRLKDAPKLGLSQGDILFKEEKEIIAVNILDSEVIHIQAKSVAEVAKICYEIGNRHAALYYGESQFEFKTPFEKPTLALLEKLGVQNRVLSSKLDSKERLTVSMPHSEPNFKVSLASDFKVVMK.

This sequence belongs to the UreE family.

The protein resides in the cytoplasm. In terms of biological role, involved in urease metallocenter assembly. Binds nickel. Probably functions as a nickel donor during metallocenter assembly. This Helicobacter pylori (strain HPAG1) protein is Urease accessory protein UreE.